The following is a 225-amino-acid chain: Glutathione S-transferase-like protein tpcF (225 aa).

The GST N-terminal domain occupies 4-85; that stretch reads IQPITVYGKG…YLVSHYDPDH (82 aa). The 134-residue stretch at 92-225 folds into the GST C-terminal domain; it reads GSNLAALATQ…KGMADIFPST (134 aa).

It belongs to the GST superfamily. Specifically expressed in conidia.

The protein operates within secondary metabolite biosynthesis. In terms of biological role, glutathione S-transferase-like protein; part of the gene cluster that mediates the biosynthesis of trypacidin, a mycotoxin with antiprotozoal activity and that plays a role in the infection process. The pathway begins with the synthesis of atrochrysone thioester by the polyketide synthase (PKS) tpcC. The atrochrysone carboxyl ACP thioesterase tpcB then breaks the thioester bond and releases the atrochrysone carboxylic acid from tpcC. The decarboxylase tpcK converts atrochrysone carboxylic acid to atrochrysone which is further reduced into emodin anthrone. The next step is performed by the emodin anthrone oxygenase tpcL that catalyzes the oxidation of emodinanthrone to emodin. Emodin O-methyltransferase encoded by tpcA catalyzes methylation of the 8-hydroxy group of emodin to form questin. Ring cleavage of questin by questin oxidase tpcI leads to desmethylsulochrin via several intermediates including questin epoxide. Another methylation step catalyzed by tpcM leads to the formation of sulochrin which is further converted to monomethylsulfochrin by tpcH. Finally, the tpcJ catalyzes the conversion of monomethylsulfochrin to trypacidin. Trypacidin is toxic for human pulmonary and bronchial epithelial cells by initiating the intracellular formation of nitric oxide (NO) and hydrogen peroxide (H(2)O(2)), thus triggering host necrotic cell death. The trypacidin pathway is also able to produce endocrocin via a distinct route from the endocrocin Enc pathway. This chain is Glutathione S-transferase-like protein tpcF, found in Aspergillus fumigatus (strain ATCC MYA-4609 / CBS 101355 / FGSC A1100 / Af293) (Neosartorya fumigata).